The following is a 539-amino-acid chain: Histone-arginine methyltransferase CARMER (539 aa).

The SAM-dependent MTase PRMT-type domain maps to 149–458; the sequence is ASQYFQFYGY…QSYDVTIDLH (310 aa). 6 residues coordinate S-adenosyl-L-methionine: Gln162, Arg171, Gly195, Glu217, Glu246, and Thr274. Asymmetric dimethylarginine; by autocatalysis is present on Arg509.

This sequence belongs to the class I-like SAM-binding methyltransferase superfamily. Protein arginine N-methyltransferase family. Homodimer. Post-translationally, the dimethylated protein is the major form.

The protein resides in the cytoplasm. The protein localises to the nucleus. It carries out the reaction L-arginyl-[protein] + 2 S-adenosyl-L-methionine = N(omega),N(omega)-dimethyl-L-arginyl-[protein] + 2 S-adenosyl-L-homocysteine + 2 H(+). In terms of biological role, methylates (mono- and asymmetric dimethylation) the guanidino nitrogens of arginyl residues in proteins. May methylate histone H3 at 'Arg-17' and activate transcription via chromatin remodeling. This chain is Histone-arginine methyltransferase CARMER (Art4), found in Drosophila mojavensis (Fruit fly).